Consider the following 701-residue polypeptide: Elongation factor G (701 aa).

Residues 8 to 290 (TQYRNIGISA…AIIEYLPSPK (283 aa)) form the tr-type G domain. GTP contacts are provided by residues 17–24 (AHIDAGKT), 88–92 (DTPGH), and 142–145 (NKMD).

Belongs to the TRAFAC class translation factor GTPase superfamily. Classic translation factor GTPase family. EF-G/EF-2 subfamily.

It localises to the cytoplasm. Functionally, catalyzes the GTP-dependent ribosomal translocation step during translation elongation. During this step, the ribosome changes from the pre-translocational (PRE) to the post-translocational (POST) state as the newly formed A-site-bound peptidyl-tRNA and P-site-bound deacylated tRNA move to the P and E sites, respectively. Catalyzes the coordinated movement of the two tRNA molecules, the mRNA and conformational changes in the ribosome. This is Elongation factor G from Buchnera aphidicola subsp. Cinara cedri (strain Cc).